Reading from the N-terminus, the 860-residue chain is Probable beta-glucosidase A (860 aa).

The signal sequence occupies residues 1-19; sequence MRFTSIEAVALTAVSLASA. N-linked (GlcNAc...) asparagine glycosylation is found at Asn61, Asn211, and Asn252. The active site involves Asp280. N-linked (GlcNAc...) asparagine glycosylation is found at Asn315, Asn322, Asn354, Asn387, Asn442, Asn523, Asn542, Asn564, Asn658, Asn690, and Asn712.

This sequence belongs to the glycosyl hydrolase 3 family.

Its subcellular location is the secreted. The catalysed reaction is Hydrolysis of terminal, non-reducing beta-D-glucosyl residues with release of beta-D-glucose.. It participates in glycan metabolism; cellulose degradation. Its function is as follows. Beta-glucosidases are one of a number of cellulolytic enzymes involved in the degradation of cellulosic biomass. Catalyzes the last step releasing glucose from the inhibitory cellobiose. This Aspergillus niger (strain ATCC MYA-4892 / CBS 513.88 / FGSC A1513) protein is Probable beta-glucosidase A (bglA).